The following is a 243-amino-acid chain: Carboxy-S-adenosyl-L-methionine synthase (243 aa).

Residues tyrosine 40, 65–67 (GCS), 90–91 (DN), 118–119 (DI), asparagine 133, and arginine 200 each bind S-adenosyl-L-methionine.

It belongs to the class I-like SAM-binding methyltransferase superfamily. Cx-SAM synthase family. Homodimer.

It catalyses the reaction prephenate + S-adenosyl-L-methionine = carboxy-S-adenosyl-L-methionine + 3-phenylpyruvate + H2O. In terms of biological role, catalyzes the conversion of S-adenosyl-L-methionine (SAM) to carboxy-S-adenosyl-L-methionine (Cx-SAM). The protein is Carboxy-S-adenosyl-L-methionine synthase of Shewanella oneidensis (strain ATCC 700550 / JCM 31522 / CIP 106686 / LMG 19005 / NCIMB 14063 / MR-1).